Consider the following 612-residue polypeptide: MAFAVELEEWVGAHWHRFITRHASGEFEAARVTLESMRRPLGMLFRALGGAPGVALEATPARRLLLRRTWLQRVAGTCEQAPVSWFNGDSLRLPESLAVYPQAELNRELYRWLALLAASAGPLRHWAQDNQRWARQLLDAYPALRPRYARLVAAHLRQRPSLDDCPAADAELEIALRRALAEPGSVERFPRVERAPWPVPLWLYPGERWTPSASAEDGEEAAAGAGKRQVARSGARKRAERIEERNSERNLLLFRLESLLSWSEHLALDRCSDDEDDPDGARVAEDLDYLSLSRQRTQKGGGLRLDLDLPAADYDDLPLGPGLKLPEWDYRQQRLLSDHVLLQPMRPRGATSASLPAHLEKTALHLRRQFACLRDGRQRLRQQPQGDEIDLDAWLDFQVERRRGGSTQPGLFLEQRPRRRDLACLLLADLSMSTEAYLDDQRRVIDSIVDSLLLFGEALQALGDPFALYGFSSVRRQQVRWQVLKDFDEGYGGEVRGRVLALSPGYYTRMGAAIRRASQVLGGQPQKRRLLLLLSDGKPNDLDRYEGRYGIEDTRQAVIEARSQGLVPFCITIDKEAADYLPYLFGADGFALVERAGQLPERLLQLYRRLRR.

A disordered region spans residues 213–238; sequence ASAEDGEEAAAGAGKRQVARSGARKR. In terms of domain architecture, VWFA spans 421–610; the sequence is DLACLLLADL…ERLLQLYRRL (190 aa).

It is found in the cytoplasm. Its function is as follows. Component of the anaerobic respiratory chain that transforms nitrate to dinitrogen (denitrification). Function unknown, but essential for the denitrification process. This is an uncharacterized protein from Pseudomonas aeruginosa (strain ATCC 15692 / DSM 22644 / CIP 104116 / JCM 14847 / LMG 12228 / 1C / PRS 101 / PAO1).